Here is a 166-residue protein sequence, read N- to C-terminus: Putative 4-hydroxy-4-methyl-2-oxoglutarate aldolase 3 (166 aa).

N-acetylalanine is present on Ala-2. Substrate is bound by residues 81-84 (GGNL) and Arg-103. Asp-104 is a binding site for a divalent metal cation.

Belongs to the class II aldolase/RraA-like family. As to quaternary structure, homotrimer. A divalent metal cation is required as a cofactor.

The enzyme catalyses 4-hydroxy-4-methyl-2-oxoglutarate = 2 pyruvate. The catalysed reaction is oxaloacetate + H(+) = pyruvate + CO2. Catalyzes the aldol cleavage of 4-hydroxy-4-methyl-2-oxoglutarate (HMG) into 2 molecules of pyruvate. Also contains a secondary oxaloacetate (OAA) decarboxylase activity due to the common pyruvate enolate transition state formed following C-C bond cleavage in the retro-aldol and decarboxylation reactions. The protein is Putative 4-hydroxy-4-methyl-2-oxoglutarate aldolase 3 of Arabidopsis thaliana (Mouse-ear cress).